A 227-amino-acid polypeptide reads, in one-letter code: Urease accessory protein UreF (227 aa).

The protein belongs to the UreF family. In terms of assembly, ureD, UreF and UreG form a complex that acts as a GTP-hydrolysis-dependent molecular chaperone, activating the urease apoprotein by helping to assemble the nickel containing metallocenter of UreC. The UreE protein probably delivers the nickel.

Its subcellular location is the cytoplasm. In terms of biological role, required for maturation of urease via the functional incorporation of the urease nickel metallocenter. In Actinobacillus pleuropneumoniae (Haemophilus pleuropneumoniae), this protein is Urease accessory protein UreF.